The following is a 96-amino-acid chain: Co-chaperonin GroES (96 aa).

Belongs to the GroES chaperonin family. Heptamer of 7 subunits arranged in a ring. Interacts with the chaperonin GroEL.

The protein localises to the cytoplasm. Together with the chaperonin GroEL, plays an essential role in assisting protein folding. The GroEL-GroES system forms a nano-cage that allows encapsulation of the non-native substrate proteins and provides a physical environment optimized to promote and accelerate protein folding. GroES binds to the apical surface of the GroEL ring, thereby capping the opening of the GroEL channel. In Colwellia maris, this protein is Co-chaperonin GroES.